Reading from the N-terminus, the 346-residue chain is F(420)H(2) dehydrogenase subunit F (346 aa).

2 consecutive 4Fe-4S ferredoxin-type domains span residues 5 to 34 (IAEVIQHDVCAACGACEAVCPIGAVTVKKA) and 46 to 76 (YEKGAAFQVCEGCLTCSRICPVVDGFIENEL). 8 residues coordinate [4Fe-4S] cluster: cysteine 14, cysteine 17, cysteine 20, cysteine 24, cysteine 55, cysteine 58, cysteine 61, and cysteine 65.

In terms of assembly, the FPO complex is composed of at least 13 different subunits. It depends on [4Fe-4S] cluster as a cofactor. Requires FAD as cofactor.

Its subcellular location is the membrane. The protein resides in the cytoplasm. It carries out the reaction methanophenazine + reduced coenzyme F420-(gamma-L-Glu)(n) = dihydromethanophenazine + oxidized coenzyme F420-(gamma-L-Glu)(n) + H(+). The catalysed reaction is reduced coenzyme F420-(gamma-L-Glu)(n) + 2 oxidized [2Fe-2S]-[ferredoxin] = oxidized coenzyme F420-(gamma-L-Glu)(n) + 2 reduced [2Fe-2S]-[ferredoxin] + 3 H(+). Its function is as follows. Component of the F(420)H(2) dehydrogenase (FPO complex) which is part of the energy-conserving F(420)H(2):heterodisulfide oxidoreductase system. The membrane-bound electron transfer system of the complex plays an important role in the metabolism of methylotrophic methanogens when the organisms grow on methanol or methylamines. Catalyzes the oxidation of methanophenazine to dihydromethanophenazine. It shuttles electrons from F(420)H(2), via FAD and iron-sulfur (Fe-S) centers, to methanophenazine (an electron carrier in the membrane). It couples the redox reaction to proton translocation (for every two electrons transferred, two hydrogen ions are translocated across the cytoplasmic membrane), and thus conserves the redox energy in a proton gradient. It also catalyzes the oxidation of F(420)H(2) with quinones such as 2,3-dimethyl-1,4-naphthoquinone, 2-methyl-1,4-naphthoquinone and tetramethyl-p-benzoquinone. Might have a dual function, acting as an electron input module when connected to the membrane integral Fpo complex, or as a soluble single subunit, being involved in the reoxydation of reduced ferredoxin in the cytoplasm. In Methanosarcina mazei (strain ATCC BAA-159 / DSM 3647 / Goe1 / Go1 / JCM 11833 / OCM 88) (Methanosarcina frisia), this protein is F(420)H(2) dehydrogenase subunit F (fpoF).